The following is a 132-amino-acid chain: Profilin-1 (132 aa).

Belongs to the profilin family. In terms of assembly, occurs in many kinds of cells as a complex with monomeric actin in a 1:1 ratio.

The protein localises to the cytoplasm. It is found in the cytoskeleton. In terms of biological role, binds to actin and affects the structure of the cytoskeleton. At high concentrations, profilin prevents the polymerization of actin, whereas it enhances it at low concentrations. By binding to PIP2, it inhibits the formation of IP3 and DG. This is Profilin-1 (PRO1) from Parietaria judaica (Pellitory-of-the-wall).